The following is a 204-amino-acid chain: NAD(P)H dehydrogenase (quinone) FQR1 (204 aa).

The Flavodoxin-like domain occupies 5-192 (VYIVYYSMYG…QQAFHQGQYI (188 aa)). Residues 11-15 (SMYGH), 112-165 (IFYS…SPYG), and His136 contribute to the FMN site. An NAD(+)-binding site is contributed by Tyr13.

The protein belongs to the WrbA family. FMN is required as a cofactor.

It localises to the cell membrane. The catalysed reaction is a quinone + NADH + H(+) = a quinol + NAD(+). It carries out the reaction a quinone + NADPH + H(+) = a quinol + NADP(+). Functionally, catalyzes the transfer of electrons from NADH and NADPH to several quinones in vitro. May act as detoxification enzyme, and protect against auxin-induced oxidative stress. This chain is NAD(P)H dehydrogenase (quinone) FQR1, found in Arabidopsis thaliana (Mouse-ear cress).